We begin with the raw amino-acid sequence, 421 residues long: Gamma-glutamyl phosphate reductase (421 aa).

Belongs to the gamma-glutamyl phosphate reductase family.

It is found in the cytoplasm. It carries out the reaction L-glutamate 5-semialdehyde + phosphate + NADP(+) = L-glutamyl 5-phosphate + NADPH + H(+). Its pathway is amino-acid biosynthesis; L-proline biosynthesis; L-glutamate 5-semialdehyde from L-glutamate: step 2/2. In terms of biological role, catalyzes the NADPH-dependent reduction of L-glutamate 5-phosphate into L-glutamate 5-semialdehyde and phosphate. The product spontaneously undergoes cyclization to form 1-pyrroline-5-carboxylate. The chain is Gamma-glutamyl phosphate reductase from Bordetella petrii (strain ATCC BAA-461 / DSM 12804 / CCUG 43448).